Reading from the N-terminus, the 101-residue chain is Small ribosomal subunit protein uS14A (101 aa).

Residues Leu-31–Asp-67 are disordered. Positions Glu-38 to Arg-53 are enriched in basic and acidic residues.

Belongs to the universal ribosomal protein uS14 family. As to quaternary structure, part of the 30S ribosomal subunit. Contacts proteins S3 and S10.

Its function is as follows. Binds 16S rRNA, required for the assembly of 30S particles and may also be responsible for determining the conformation of the 16S rRNA at the A site. This chain is Small ribosomal subunit protein uS14A, found in Streptomyces coelicolor (strain ATCC BAA-471 / A3(2) / M145).